The chain runs to 400 residues: Elongation factor Tu (400 aa).

The tr-type G domain occupies 10-208; the sequence is KPHMNVGTIG…AMDSYFPDPV (199 aa). Residues 19-26 form a G1 region; sequence GHIDHGKT. 19 to 26 is a GTP binding site; sequence GHIDHGKT. Position 26 (Thr26) interacts with Mg(2+). Residues 60–64 are G2; that stretch reads GITIN. Positions 81–84 are G3; that stretch reads DCPG. GTP is bound by residues 81–85 and 136–139; these read DCPGH and NKVD. The G4 stretch occupies residues 136-139; sequence NKVD. The interval 174–176 is G5; it reads SAL.

It belongs to the TRAFAC class translation factor GTPase superfamily. Classic translation factor GTPase family. EF-Tu/EF-1A subfamily. In terms of assembly, monomer.

It is found in the cytoplasm. The catalysed reaction is GTP + H2O = GDP + phosphate + H(+). Functionally, GTP hydrolase that promotes the GTP-dependent binding of aminoacyl-tRNA to the A-site of ribosomes during protein biosynthesis. This Fervidobacterium nodosum (strain ATCC 35602 / DSM 5306 / Rt17-B1) protein is Elongation factor Tu.